Consider the following 329-residue polypeptide: Phosphate acyltransferase (329 aa).

The protein belongs to the PlsX family. In terms of assembly, homodimer. Probably interacts with PlsY.

It localises to the cytoplasm. The enzyme catalyses a fatty acyl-[ACP] + phosphate = an acyl phosphate + holo-[ACP]. It participates in lipid metabolism; phospholipid metabolism. Functionally, catalyzes the reversible formation of acyl-phosphate (acyl-PO(4)) from acyl-[acyl-carrier-protein] (acyl-ACP). This enzyme utilizes acyl-ACP as fatty acyl donor, but not acyl-CoA. The chain is Phosphate acyltransferase from Shouchella clausii (strain KSM-K16) (Alkalihalobacillus clausii).